Here is a 231-residue protein sequence, read N- to C-terminus: uncharacterized protein (231 aa).

Residues 1–10 show a composition bias toward basic and acidic residues; the sequence is MDGKKREVEN. Positions 1 to 35 are disordered; sequence MDGKKREVENGKNGNNIKDGNSSNTTNYGKDTKTT. The span at 11–24 shows a compositional bias: low complexity; that stretch reads GKNGNNIKDGNSSN. Residues 25 to 35 show a composition bias toward polar residues; that stretch reads TTNYGKDTKTT.

This is an uncharacterized protein from Aquifex aeolicus (strain VF5).